The primary structure comprises 321 residues: Aspartate carbamoyltransferase catalytic subunit (321 aa).

Carbamoyl phosphate contacts are provided by Arg-64 and Thr-65. Lys-92 provides a ligand contact to L-aspartate. Arg-114, His-144, and Gln-147 together coordinate carbamoyl phosphate. Arg-177 and Arg-232 together coordinate L-aspartate. Positions 273 and 274 each coordinate carbamoyl phosphate.

The protein belongs to the aspartate/ornithine carbamoyltransferase superfamily. ATCase family. Heterododecamer (2C3:3R2) of six catalytic PyrB chains organized as two trimers (C3), and six regulatory PyrI chains organized as three dimers (R2).

The catalysed reaction is carbamoyl phosphate + L-aspartate = N-carbamoyl-L-aspartate + phosphate + H(+). The protein operates within pyrimidine metabolism; UMP biosynthesis via de novo pathway; (S)-dihydroorotate from bicarbonate: step 2/3. Its function is as follows. Catalyzes the condensation of carbamoyl phosphate and aspartate to form carbamoyl aspartate and inorganic phosphate, the committed step in the de novo pyrimidine nucleotide biosynthesis pathway. The chain is Aspartate carbamoyltransferase catalytic subunit from Alkalilimnicola ehrlichii (strain ATCC BAA-1101 / DSM 17681 / MLHE-1).